A 182-amino-acid polypeptide reads, in one-letter code: Late embryogenesis abundant protein 3 (182 aa).

Residues methionine 1–threonine 51 form a disordered region. A Nuclear localization signal (NLS) motif is present at residues serine 7–proline 11. A compositionally biased stretch (basic and acidic residues) spans arginine 10–aspartate 21. SMP domains lie at valine 58–glutamine 115 and valine 123–glutamine 181. A disordered region spans residues glutamate 145–leucine 182.

The protein belongs to the LEA type SMP family.

It localises to the cytoplasm. It is found in the nucleus. Its function is as follows. LEA proteins are late embryonic proteins abundant in higher plant seed embryos. The function of those proteins is not known. The protein is Late embryogenesis abundant protein 3 of Arabidopsis thaliana (Mouse-ear cress).